The sequence spans 200 residues: MASSLTCTGVIWALLSFLCAATSCVGFFMPYWLWGSQLGKPVSFGTFRRCSYPVHDESRQMMVMVEECGRYASFQGIPSAEWRICTIVTGLGCGLLLLVALTALMGCCVSDLISRTVGRVAGGIQFLGGLLIGAGCALYPLGWDSEEVRQTCGYTSGQFDLGKCEIGWAYYCTGAGATAAMLLCTWLACFSGKKQKHYPY.

The signal sequence occupies residues 1 to 21 (MASSLTCTGVIWALLSFLCAA). 3 helical membrane-spanning segments follow: residues 84–104 (ICTI…LTAL), 123–143 (GIQF…PLGW), and 166–186 (IGWA…LCTW).

It belongs to the LHFP family. As to expression, pancreas, kidney, skeletal muscle, liver, lung brain, heart, colon, small intestine, uterus, testis, prostate, thymus, spleen and placenta.

The protein resides in the membrane. In Homo sapiens (Human), this protein is LHFPL tetraspan subfamily member 6 protein.